The following is a 523-amino-acid chain: MTDIHAQRILILDFGSQYTQLIARRVREIGVYCEIRAFDMTAEELAEFAPKGIILSGGPESVTAAQTPRAPQAVFEAGIPVLGICYGMQTMAEQLGGKVIAGEKHEFGYARVEKAEPNALLDGIVDHEEQGKEFLDVWMSHGDRVGEMPAGFVATATTGSCPIAGMANDEKRFYGIQFHPEVTHTLQGGRLLERFIRELCECEALWTPSNIISDAIDTIREQVGTDEVILGLSGGVDSSVVAALLHKAIGDQLTCVFVDNGLLRHQEGDQVMEMFADNMGVKVIRVDAEDNFLGKLAGEADPEKKRKIIGNTFIDIFDDEASKLQNANWLAQGTIYPDVIESAASKTGKAHVIKSHHNVGGLPEDMKLKLVEPLRELFKDEVRKIGLELGLPYDMVYRHPFPGPGLGVRILGEVKKEYADTLRLADHIFIEELRAAGLYHKTSQAFAVFLPVKSVGVVGDARRYEYVVALRAVETIDFMTARWAHLPYDFLELVSSRIINEIPGISRVTYDISSKPPATIEWE.

Residues 8–205 (RILILDFGSQ…IRELCECEAL (198 aa)) form the Glutamine amidotransferase type-1 domain. C85 functions as the Nucleophile in the catalytic mechanism. Residues H179 and E181 contribute to the active site. Residues 206 to 398 (WTPSNIISDA…LGLPYDMVYR (193 aa)) form the GMPS ATP-PPase domain. 233-239 (SGGVDSS) lines the ATP pocket.

In terms of assembly, homodimer.

The enzyme catalyses XMP + L-glutamine + ATP + H2O = GMP + L-glutamate + AMP + diphosphate + 2 H(+). The protein operates within purine metabolism; GMP biosynthesis; GMP from XMP (L-Gln route): step 1/1. In terms of biological role, catalyzes the synthesis of GMP from XMP. This is GMP synthase [glutamine-hydrolyzing] from Alcanivorax borkumensis (strain ATCC 700651 / DSM 11573 / NCIMB 13689 / SK2).